A 494-amino-acid polypeptide reads, in one-letter code: Cytochrome P450 2G1 (494 aa).

Cysteine 439 contributes to the heme binding site.

This sequence belongs to the cytochrome P450 family. Heme serves as cofactor. As to expression, olfactory epithelium.

It is found in the endoplasmic reticulum membrane. The protein localises to the microsome membrane. The enzyme catalyses an organic molecule + reduced [NADPH--hemoprotein reductase] + O2 = an alcohol + oxidized [NADPH--hemoprotein reductase] + H2O + H(+). In terms of biological role, cytochromes P450 are a group of heme-thiolate monooxygenases. This isozyme seems to be implicated in olfaction. The sequence is that of Cytochrome P450 2G1 (CYP2G1) from Oryctolagus cuniculus (Rabbit).